The sequence spans 289 residues: Oxaloacetate decarboxylase (289 aa).

S50 is a binding site for substrate. A Mg(2+)-binding site is contributed by D88. Residues R159 and H235 each coordinate substrate.

Belongs to the isocitrate lyase family. Oxaloacetate decarboxylase subfamily. As to quaternary structure, homotetramer; dimer of dimers. Mg(2+) serves as cofactor.

The enzyme catalyses oxaloacetate + H(+) = pyruvate + CO2. In terms of biological role, catalyzes the decarboxylation of oxaloacetate into pyruvate. Seems to play a role in maintaining cellular concentrations of bicarbonate and pyruvate. This Pseudomonas fluorescens (strain SBW25) protein is Oxaloacetate decarboxylase.